A 1399-amino-acid polypeptide reads, in one-letter code: DNA-directed RNA polymerase subunit beta' (1399 aa).

Residues C71, C73, C86, and C89 each contribute to the Zn(2+) site. Mg(2+)-binding residues include D462, D464, and D466. Residues C810, C884, C891, and C894 each coordinate Zn(2+). Residues 1376–1399 (EREKQAAITPAAPEAEPLALPPAE) are disordered.

It belongs to the RNA polymerase beta' chain family. As to quaternary structure, the RNAP catalytic core consists of 2 alpha, 1 beta, 1 beta' and 1 omega subunit. When a sigma factor is associated with the core the holoenzyme is formed, which can initiate transcription. It depends on Mg(2+) as a cofactor. Zn(2+) serves as cofactor.

It carries out the reaction RNA(n) + a ribonucleoside 5'-triphosphate = RNA(n+1) + diphosphate. Functionally, DNA-dependent RNA polymerase catalyzes the transcription of DNA into RNA using the four ribonucleoside triphosphates as substrates. The sequence is that of DNA-directed RNA polymerase subunit beta' from Afipia carboxidovorans (strain ATCC 49405 / DSM 1227 / KCTC 32145 / OM5) (Oligotropha carboxidovorans).